Reading from the N-terminus, the 116-residue chain is U11-theraphotoxin-Hhn1b (116 aa).

The first 21 residues, 1–21 (MNTVRVAFLLVFVLAVSLGQA), serve as a signal peptide directing secretion. Residues 22-74 (DKDENRMEMQEKTEQGKSYLDFAENLLLQKLEELEAKLLEEDSEESRNSRQKR) constitute a propeptide that is removed on maturation. Positions 61–83 (EEDSEESRNSRQKRCIGEGVPCD) are disordered. Cystine bridges form between cysteine 75–cysteine 90, cysteine 82–cysteine 95, and cysteine 89–cysteine 110.

This sequence belongs to the neurotoxin 14 (magi-1) family. 01 (HNTX-16) subfamily. In terms of tissue distribution, expressed by the venom gland.

It localises to the secreted. Functionally, probable ion channel inhibitor. This chain is U11-theraphotoxin-Hhn1b, found in Cyriopagopus hainanus (Chinese bird spider).